The following is a 229-amino-acid chain: 2,3-bisphosphoglycerate-dependent phosphoglycerate mutase (229 aa).

Residues 7–14 (RHGQSEWN), 20–21 (TG), R59, 86–89 (ERHY), K97, 113–114 (RR), and 182–183 (GN) each bind substrate. Residue H8 is the Tele-phosphohistidine intermediate of the active site. E86 (proton donor/acceptor) is an active-site residue.

Belongs to the phosphoglycerate mutase family. BPG-dependent PGAM subfamily.

It carries out the reaction (2R)-2-phosphoglycerate = (2R)-3-phosphoglycerate. The protein operates within carbohydrate degradation; glycolysis; pyruvate from D-glyceraldehyde 3-phosphate: step 3/5. In terms of biological role, catalyzes the interconversion of 2-phosphoglycerate and 3-phosphoglycerate. This chain is 2,3-bisphosphoglycerate-dependent phosphoglycerate mutase, found in Listeria monocytogenes serotype 4a (strain HCC23).